The primary structure comprises 138 residues: Small ribosomal subunit protein uS9 (138 aa).

Belongs to the universal ribosomal protein uS9 family.

In Sulfolobus acidocaldarius (strain ATCC 33909 / DSM 639 / JCM 8929 / NBRC 15157 / NCIMB 11770), this protein is Small ribosomal subunit protein uS9 (rps9).